The sequence spans 236 residues: 5'-methylthioadenosine/S-adenosylhomocysteine nucleosidase (236 aa).

E12 acts as the Proton acceptor in catalysis. Substrate-binding positions include G78, I153, and 174-175 (ME). The Proton donor role is filled by D198.

This sequence belongs to the PNP/UDP phosphorylase family. MtnN subfamily.

It carries out the reaction S-adenosyl-L-homocysteine + H2O = S-(5-deoxy-D-ribos-5-yl)-L-homocysteine + adenine. The catalysed reaction is S-methyl-5'-thioadenosine + H2O = 5-(methylsulfanyl)-D-ribose + adenine. The enzyme catalyses 5'-deoxyadenosine + H2O = 5-deoxy-D-ribose + adenine. It participates in amino-acid biosynthesis; L-methionine biosynthesis via salvage pathway; S-methyl-5-thio-alpha-D-ribose 1-phosphate from S-methyl-5'-thioadenosine (hydrolase route): step 1/2. Functionally, catalyzes the irreversible cleavage of the glycosidic bond in both 5'-methylthioadenosine (MTA) and S-adenosylhomocysteine (SAH/AdoHcy) to adenine and the corresponding thioribose, 5'-methylthioribose and S-ribosylhomocysteine, respectively. Also cleaves 5'-deoxyadenosine, a toxic by-product of radical S-adenosylmethionine (SAM) enzymes, into 5-deoxyribose and adenine. The sequence is that of 5'-methylthioadenosine/S-adenosylhomocysteine nucleosidase from Shewanella baltica (strain OS185).